The primary structure comprises 495 residues: Glycerol kinase (495 aa).

Thr-12 is an ADP binding site. ATP is bound by residues Thr-12, Thr-13, and Ser-14. A sn-glycerol 3-phosphate-binding site is contributed by Thr-12. Arg-16 lines the ADP pocket. Sn-glycerol 3-phosphate contacts are provided by Arg-82, Glu-83, Tyr-134, and Asp-243. Glycerol contacts are provided by Arg-82, Glu-83, Tyr-134, Asp-243, and Gln-244. Residues Thr-265 and Gly-308 each coordinate ADP. 4 residues coordinate ATP: Thr-265, Gly-308, Gln-312, and Gly-409. ADP contacts are provided by Gly-409 and Asn-413.

Belongs to the FGGY kinase family.

The enzyme catalyses glycerol + ATP = sn-glycerol 3-phosphate + ADP + H(+). It functions in the pathway polyol metabolism; glycerol degradation via glycerol kinase pathway; sn-glycerol 3-phosphate from glycerol: step 1/1. Its activity is regulated as follows. Inhibited by fructose 1,6-bisphosphate (FBP). In terms of biological role, key enzyme in the regulation of glycerol uptake and metabolism. Catalyzes the phosphorylation of glycerol to yield sn-glycerol 3-phosphate. This is Glycerol kinase from Ectopseudomonas mendocina (strain ymp) (Pseudomonas mendocina).